Consider the following 725-residue polypeptide: Sesterterpene synthase btcA (725 aa).

Positions M1 to W333 are terpene cyclase. D100 serves as a coordination point for Mg(2+). Substrate is bound by residues D100, N236, S240–E244, and R329–H330. The short motif at D100–E104 is the DDXXD 1 element. The NSE/DTE motif lies at N236–E244. The prenyltransferase stretch occupies residues K334–S722. The disordered stretch occupies residues V352–P426. The segment covering Q355–A364 has biased composition (polar residues). Positions A375–S419 are enriched in low complexity. Isopentenyl diphosphate-binding residues include K442, R445, and H474. Positions 481 and 485 each coordinate Mg(2+). A DDXXD 2 motif is present at residues D481–D485. R490 contributes to the dimethylallyl diphosphate binding site. Residue R491 coordinates isopentenyl diphosphate. Positions 568, 569, 604, 611, 621, and 631 each coordinate dimethylallyl diphosphate.

This sequence in the N-terminal section; belongs to the terpene synthase family. In the C-terminal section; belongs to the FPP/GGPP synthase family. As to quaternary structure, hexamer. It depends on Mg(2+) as a cofactor.

The enzyme catalyses isopentenyl diphosphate + (2E,6E)-farnesyl diphosphate = (2E,6E,10E)-geranylgeranyl diphosphate + diphosphate. It carries out the reaction isopentenyl diphosphate + (2E,6E,10E)-geranylgeranyl diphosphate = (2E,6E,10E,14E)-geranylfarnesyl diphosphate + diphosphate. Its pathway is secondary metabolite biosynthesis; terpenoid biosynthesis. Bifunctional terpene synthase; part of the gene cluster that mediates the biosynthesis of betaestacins. The bifunctional terpene synthase btcA converts isopentenyl diphosphate (IPP) and dimethylallyl diphosphate (DMAPP) into the sesterterpene betaestacin I. The C-terminal prenyltransferase (PT) domain of btcA catalyzes formation of GFPP, whereas the N-terminal terpene cyclase (TC) domain catalyzes the cyclization of GFPP into betaestacin I. The cytochrome P450 monooxygenase btcB is then responsible for the six-step oxidation of betaestacin I to yield betaestacin II. The roles of the cytochrome P450 monooxygenase btcC and the alpha-ketoglutarate-dependent dioxygenase btcD have not been identified yet. This Neocamarosporium betae (Beet black rot fungus) protein is Sesterterpene synthase btcA.